Reading from the N-terminus, the 393-residue chain is S-adenosylmethionine synthase (393 aa).

His16 is an ATP binding site. Asp18 is a Mg(2+) binding site. Glu44 provides a ligand contact to K(+). Positions 57 and 100 each coordinate L-methionine. The flexible loop stretch occupies residues 100–110; that stretch reads QSQDIAQGVDK. ATP-binding positions include 167–169, 238–239, Asp247, 253–254, Ala270, and Lys274; these read DAK, RF, and RK. Position 247 (Asp247) interacts with L-methionine. Residue Lys278 coordinates L-methionine.

Belongs to the AdoMet synthase family. As to quaternary structure, homotetramer; dimer of dimers. Mg(2+) is required as a cofactor. K(+) serves as cofactor.

The protein resides in the cytoplasm. It catalyses the reaction L-methionine + ATP + H2O = S-adenosyl-L-methionine + phosphate + diphosphate. It participates in amino-acid biosynthesis; S-adenosyl-L-methionine biosynthesis; S-adenosyl-L-methionine from L-methionine: step 1/1. Functionally, catalyzes the formation of S-adenosylmethionine (AdoMet) from methionine and ATP. The overall synthetic reaction is composed of two sequential steps, AdoMet formation and the subsequent tripolyphosphate hydrolysis which occurs prior to release of AdoMet from the enzyme. In Delftia acidovorans (strain DSM 14801 / SPH-1), this protein is S-adenosylmethionine synthase.